The chain runs to 269 residues: Cytochrome c oxidase subunit 3 (269 aa).

The next 7 helical transmembrane spans lie at 7–29 (GYLQLHPFHLVGPSPWPIFTSFS), 51–71 (IILSIITVLYSMTLWFKDIIA), 90–110 (GFLLFVVSEILIFASLFWAYL), 127–147 (VGIDVISPAELPLLNTIILLA), 167–187 (TLYGFIYSTLLIALFVMFQFL), 205–225 (FYSLTGLHGLHMIMLTIMLVI), and 247–267 (ILYLHVLDVIWLFIYIIVYWW).

Belongs to the cytochrome c oxidase subunit 3 family. In terms of assembly, component of the cytochrome c oxidase (complex IV, CIV), a multisubunit enzyme composed of a catalytic core of 3 subunits and several supernumerary subunits. The complex exists as a monomer or a dimer and forms supercomplexes (SCs) in the inner mitochondrial membrane with ubiquinol-cytochrome c oxidoreductase (cytochrome b-c1 complex, complex III, CIII).

It localises to the mitochondrion inner membrane. It catalyses the reaction 4 Fe(II)-[cytochrome c] + O2 + 8 H(+)(in) = 4 Fe(III)-[cytochrome c] + 2 H2O + 4 H(+)(out). Its function is as follows. Component of the cytochrome c oxidase, the last enzyme in the mitochondrial electron transport chain which drives oxidative phosphorylation. The respiratory chain contains 3 multisubunit complexes succinate dehydrogenase (complex II, CII), ubiquinol-cytochrome c oxidoreductase (cytochrome b-c1 complex, complex III, CIII) and cytochrome c oxidase (complex IV, CIV), that cooperate to transfer electrons derived from NADH and succinate to molecular oxygen, creating an electrochemical gradient over the inner membrane that drives transmembrane transport and the ATP synthase. Cytochrome c oxidase is the component of the respiratory chain that catalyzes the reduction of oxygen to water. Electrons originating from reduced cytochrome c in the intermembrane space (IMS) are transferred via the dinuclear copper A center (CU(A)) of subunit 2 and heme A of subunit 1 to the active site in subunit 1, a binuclear center (BNC) formed by heme A3 and copper B (CU(B)). The BNC reduces molecular oxygen to 2 water molecules using 4 electrons from cytochrome c in the IMS and 4 protons from the mitochondrial matrix. This chain is Cytochrome c oxidase subunit 3 (COX3), found in Candida parapsilosis (Yeast).